We begin with the raw amino-acid sequence, 982 residues long: Chromosome partition protein Smc (982 aa).

33–40 (PNGSGKSN) is a binding site for ATP. Coiled-coil stretches lie at residues 171 to 231 (RYTK…ELAV), 280 to 310 (SADM…VIID), and 337 to 377 (QTQL…QIEK). Residues 416–535 (TGILNTLGTF…AKDLNSAINL (120 aa)) enclose the SMC hinge domain. Coiled coils occupy residues 575–718 (SASL…SARE) and 753–822 (VKLS…IASN).

Belongs to the SMC family. In terms of assembly, homodimer.

It localises to the cytoplasm. In terms of biological role, required for chromosome condensation and partitioning. This Mycoplasma genitalium (strain ATCC 33530 / DSM 19775 / NCTC 10195 / G37) (Mycoplasmoides genitalium) protein is Chromosome partition protein Smc.